Consider the following 234-residue polypeptide: Inosine triphosphate pyrophosphatase (234 aa).

11–16 (SGNKGK) contributes to the ITP binding site. Glutamate 40 lines the Mg(2+) pocket. Residues lysine 53, 81-82 (DT), lysine 98, 176-179 (FGWD), lysine 203, and 208-209 (HR) each bind ITP.

It belongs to the HAM1 NTPase family. In terms of assembly, homodimer. The cofactor is Mg(2+). It depends on Mn(2+) as a cofactor.

It localises to the cytoplasm. It carries out the reaction ITP + H2O = IMP + diphosphate + H(+). It catalyses the reaction dITP + H2O = dIMP + diphosphate + H(+). The enzyme catalyses XTP + H2O = XMP + diphosphate + H(+). Functionally, pyrophosphatase that hydrolyzes non-canonical purine nucleotides such as inosine triphosphate (ITP), deoxyinosine triphosphate (dITP) or xanthosine 5'-triphosphate (XTP) to their respective monophosphate derivatives. The enzyme does not distinguish between the deoxy- and ribose forms. Probably excludes non-canonical purines from RNA and DNA precursor pools, thus preventing their incorporation into RNA and DNA and avoiding chromosomal lesions. The polypeptide is Inosine triphosphate pyrophosphatase (Leishmania major).